Here is a 214-residue protein sequence, read N- to C-terminus: MTRDSSLSGVFSRNWIFIRGVPAIRFLPPEGPPEIAFAGRSNVGKSSLINALVQQKGLARTSNTPGRTQELNYFIPDGFSGQRGDLPPFAVVDMPGYGFAAAPKNLVDAWTNLIFSYLRGRSTLKRVYLLIDSRHGIKNNDEDVLALLDKAAVSYQIVLTKSDKIKSNALEKLIMITQTKLLKHPAAYPEILATSSEKAYGLEELRAAILQTIA.

An EngB-type G domain is found at 31 to 214 (GPPEIAFAGR…LRAAILQTIA (184 aa)). Residues 39–46 (GRSNVGKS), 66–70 (GRTQE), 93–96 (DMPG), 160–163 (TKSD), and 194–196 (TSS) contribute to the GTP site. Mg(2+)-binding residues include serine 46 and threonine 68.

This sequence belongs to the TRAFAC class TrmE-Era-EngA-EngB-Septin-like GTPase superfamily. EngB GTPase family. Mg(2+) serves as cofactor.

Its function is as follows. Necessary for normal cell division and for the maintenance of normal septation. The protein is Probable GTP-binding protein EngB of Bartonella tribocorum (strain CIP 105476 / IBS 506).